A 102-amino-acid polypeptide reads, in one-letter code: uncharacterized protein (102 aa).

The interval 1–21 is disordered; the sequence is MAESVNENNNNAGDSNGSGRT. N-linked (GlcNAc...) asparagine glycosylation is present at Asn16. A helical membrane pass occupies residues 24-44; the sequence is NTIVTIVVVVIVVTLIIILAT. A disordered region spans residues 49 to 102; sequence IGGSGKKVGAEEPATKLSSKSDDRNGGPNKKSPAKGSSKDDNNTEESVQSNLYG. Residues 56 to 73 show a composition bias toward basic and acidic residues; that stretch reads VGAEEPATKLSSKSDDRN. N-linked (GlcNAc...) asparagine glycosylation is present at Asn90. Over residues 93 to 102 the composition is skewed to polar residues; the sequence is EESVQSNLYG.

It is found in the membrane. This is an uncharacterized protein from Encephalitozoon cuniculi (strain GB-M1) (Microsporidian parasite).